The following is a 415-amino-acid chain: Actin-like protein 9 (415 aa).

The interval 1 to 22 (MDVNGHPKFQPSPETDGPLPLT) is disordered.

This sequence belongs to the actin family. As to quaternary structure, interacts with ACTL7A.

It is found in the cytoplasmic vesicle. It localises to the secretory vesicle. The protein localises to the acrosome. Its subcellular location is the cytoplasm. The protein resides in the cytoskeleton. It is found in the perinuclear theca. Functionally, testis-specic protein that plays an important role in fusion of proacrosomal vesicles and perinuclear theca formation. This is Actin-like protein 9 (Actl9) from Mus musculus (Mouse).